The primary structure comprises 74 residues: Small ribosomal subunit protein uS15 (74 aa).

This sequence belongs to the universal ribosomal protein uS15 family. Part of the 30S ribosomal subunit. Forms a bridge to the 50S subunit in the 70S ribosome, contacting the 23S rRNA.

In terms of biological role, one of the primary rRNA binding proteins, it binds directly to 16S rRNA where it helps nucleate assembly of the platform of the 30S subunit by binding and bridging several RNA helices of the 16S rRNA. Functionally, forms an intersubunit bridge (bridge B4) with the 23S rRNA of the 50S subunit in the ribosome. This Aster yellows witches'-broom phytoplasma (strain AYWB) protein is Small ribosomal subunit protein uS15.